The chain runs to 37 residues: Large ribosomal subunit protein bL36 (37 aa).

This sequence belongs to the bacterial ribosomal protein bL36 family.

This Borreliella burgdorferi (strain ATCC 35210 / DSM 4680 / CIP 102532 / B31) (Borrelia burgdorferi) protein is Large ribosomal subunit protein bL36.